The primary structure comprises 272 residues: Putative MgpC-like protein MPN_366 (272 aa).

Disordered stretches follow at residues 65–84 (QESQ…TSGS) and 171–196 (GSGQ…PMPS). The span at 72-84 (NGSQSGSSDTSGS) shows a compositional bias: low complexity. The segment covering 173–187 (GQESSWNSQRSQKGL) has biased composition (polar residues).

Belongs to the MgpC family.

The sequence is that of Putative MgpC-like protein MPN_366 from Mycoplasma pneumoniae (strain ATCC 29342 / M129 / Subtype 1) (Mycoplasmoides pneumoniae).